The chain runs to 258 residues: Zinc import ATP-binding protein ZnuC (258 aa).

In terms of domain architecture, ABC transporter spans 7–233 (ITAKNINHAY…PAFQELFGQG (227 aa)). ATP is bound at residue 39 to 46 (GPNGAGKS).

It belongs to the ABC transporter superfamily. Zinc importer (TC 3.A.1.15.5) family. As to quaternary structure, the complex is composed of two ATP-binding proteins (ZnuC), two transmembrane proteins (ZnuB) and a solute-binding protein (ZnuA).

Its subcellular location is the cell inner membrane. The enzyme catalyses Zn(2+)(out) + ATP(in) + H2O(in) = Zn(2+)(in) + ADP(in) + phosphate(in) + H(+)(in). Its function is as follows. Part of the ABC transporter complex ZnuABC involved in zinc import. Responsible for energy coupling to the transport system. The chain is Zinc import ATP-binding protein ZnuC from Hydrogenovibrio crunogenus (strain DSM 25203 / XCL-2) (Thiomicrospira crunogena).